The sequence spans 252 residues: N-acetylglucosaminyl-phosphatidylinositol de-N-acetylase (252 aa).

The helical transmembrane segment at 2-22 threads the bilayer; that stretch reads ELVGFLCVAVAVLTWGFLRVW. Residues 23-252 are Cytoplasmic-facing; sequence NSAERMRSPE…YMRINSLRFL (230 aa).

Belongs to the PIGL family.

It localises to the endoplasmic reticulum membrane. It carries out the reaction a 6-(N-acetyl-alpha-D-glucosaminyl)-1-(1,2-diacyl-sn-glycero-3-phospho)-1D-myo-inositol + H2O = a 6-(alpha-D-glucosaminyl)-1-(1,2-diacyl-sn-glycero-3-phospho)-1D-myo-inositol + acetate. It functions in the pathway glycolipid biosynthesis; glycosylphosphatidylinositol-anchor biosynthesis. In terms of biological role, catalyzes the second step of glycosylphosphatidylinositol (GPI) biosynthesis, which is the de-N-acetylation of N-acetylglucosaminyl-phosphatidylinositol. The polypeptide is N-acetylglucosaminyl-phosphatidylinositol de-N-acetylase (Pigl) (Mus musculus (Mouse)).